The chain runs to 249 residues: Deoxyribose-phosphate aldolase (249 aa).

D105 functions as the Proton donor/acceptor in the catalytic mechanism. The active-site Schiff-base intermediate with acetaldehyde is K168. K216 functions as the Proton donor/acceptor in the catalytic mechanism.

This sequence belongs to the DeoC/FbaB aldolase family. DeoC type 1 subfamily.

It localises to the cytoplasm. The enzyme catalyses 2-deoxy-D-ribose 5-phosphate = D-glyceraldehyde 3-phosphate + acetaldehyde. It participates in carbohydrate degradation; 2-deoxy-D-ribose 1-phosphate degradation; D-glyceraldehyde 3-phosphate and acetaldehyde from 2-deoxy-alpha-D-ribose 1-phosphate: step 2/2. Functionally, catalyzes a reversible aldol reaction between acetaldehyde and D-glyceraldehyde 3-phosphate to generate 2-deoxy-D-ribose 5-phosphate. This chain is Deoxyribose-phosphate aldolase, found in Corynebacterium jeikeium (strain K411).